The primary structure comprises 185 residues: ATP synthase subunit b, chloroplastic (185 aa).

The helical transmembrane segment at 27–49 (LATNPINLSVVLGVLIFFGKGVL) threads the bilayer.

Belongs to the ATPase B chain family. F-type ATPases have 2 components, F(1) - the catalytic core - and F(0) - the membrane proton channel. F(1) has five subunits: alpha(3), beta(3), gamma(1), delta(1), epsilon(1). F(0) has four main subunits: a(1), b(1), b'(1) and c(10-14). The alpha and beta chains form an alternating ring which encloses part of the gamma chain. F(1) is attached to F(0) by a central stalk formed by the gamma and epsilon chains, while a peripheral stalk is formed by the delta, b and b' chains.

The protein resides in the plastid. Its subcellular location is the chloroplast thylakoid membrane. Its function is as follows. F(1)F(0) ATP synthase produces ATP from ADP in the presence of a proton or sodium gradient. F-type ATPases consist of two structural domains, F(1) containing the extramembraneous catalytic core and F(0) containing the membrane proton channel, linked together by a central stalk and a peripheral stalk. During catalysis, ATP synthesis in the catalytic domain of F(1) is coupled via a rotary mechanism of the central stalk subunits to proton translocation. Functionally, component of the F(0) channel, it forms part of the peripheral stalk, linking F(1) to F(0). This Vitis vinifera (Grape) protein is ATP synthase subunit b, chloroplastic.